The primary structure comprises 149 residues: NPC intracellular cholesterol transporter 2 (149 aa).

A signal peptide spans 1–21; that stretch reads MRLLVAAFLLLALGDLGPGGA. 3 disulfides stabilise this stretch: cysteine 27-cysteine 140, cysteine 42-cysteine 47, and cysteine 93-cysteine 99. N-linked (GlcNAc...) asparagine glycosylation is present at asparagine 58. Lysine 116 carries the post-translational modification N6-acetyllysine.

Belongs to the NPC2 family. Interacts with NPC1 (via the second lumenal domain) in a cholestrol-dependent manner. Interacts with NUS1/NgBR, the interaction stabilizes NCP2 and regulates cholesterol trafficking. Interacts with DHDDS. Interacts with NEDD4L (via C2 domain). Interacts with NPC1L1. In terms of tissue distribution, epididymis. High levels are found in the caput and corpus regions. Weaker levels in the distal cauda and in the efferent ducts.

Its subcellular location is the secreted. The protein localises to the endoplasmic reticulum. It is found in the lysosome. The enzyme catalyses cholesterol(in) = cholesterol(out). Functionally, intracellular cholesterol transporter which acts in concert with NPC1 and plays an important role in the egress of cholesterol from the lysosomal compartment. Unesterified cholesterol that has been released from LDLs in the lumen of the late endosomes/lysosomes is transferred by NPC2 to the cholesterol-binding pocket in the N-terminal domain of NPC1. May bind and mobilize cholesterol that is associated with membranes. NPC2 binds cholesterol with a 1:1 stoichiometry. Can bind a variety of sterols, including lathosterol, desmosterol and the plant sterols stigmasterol and beta-sitosterol. The secreted form of NCP2 regulates biliary cholesterol secretion via stimulation of ABCG5/ABCG8-mediated cholesterol transport. This Canis lupus familiaris (Dog) protein is NPC intracellular cholesterol transporter 2.